The following is a 293-amino-acid chain: Heterogeneous nuclear ribonucleoprotein C-like 1 (293 aa).

Residues 16-87 form the RRM domain; it reads SRVFIGNLNT…QVVDINLAAE (72 aa). 2 disordered regions span residues 137-177 and 206-293; these read ALAV…KLKG and KEQS…QDDS. The stretch at 177–225 forms a coiled coil; sequence GDDLQAIKQELTQIKQKVDSLLENLEKIEKEQSKQEVEVKNAKSEEEQS. Composition is skewed to basic and acidic residues over residues 206 to 222 and 229 to 240; these read KEQSKQEVEVKNAKSEE and MKKDETHVKMES. Composition is skewed to acidic residues over residues 242 to 267 and 275 to 284; these read GGAEDSAEEGDPLDDDVNEDQGDDQL and KEAEEGEDDR.

Belongs to the RRM HNRPC family. RALY subfamily.

Its subcellular location is the nucleus. May play a role in nucleosome assembly by neutralizing basic proteins such as A and B core hnRNPs. In Homo sapiens (Human), this protein is Heterogeneous nuclear ribonucleoprotein C-like 1 (HNRNPCL1).